Reading from the N-terminus, the 605-residue chain is Probable potassium transport system protein Kup (605 aa).

A run of 12 helical transmembrane segments spans residues G18–L38, I46–A66, M97–I117, G138–F158, A169–V189, A204–L224, A247–I267, F287–I307, I339–F359, A368–F388, W395–C415, and L418–I438.

Belongs to the HAK/KUP transporter (TC 2.A.72) family.

It is found in the cell inner membrane. It carries out the reaction K(+)(in) + H(+)(in) = K(+)(out) + H(+)(out). Its function is as follows. Transport of potassium into the cell. Likely operates as a K(+):H(+) symporter. This Pelobacter propionicus (strain DSM 2379 / NBRC 103807 / OttBd1) protein is Probable potassium transport system protein Kup.